A 121-amino-acid chain; its full sequence is Aspartate 1-decarboxylase (121 aa).

The active-site Schiff-base intermediate with substrate; via pyruvic acid is the Ser-25. A Pyruvic acid (Ser) modification is found at Ser-25. Thr-57 serves as a coordination point for substrate. Tyr-58 acts as the Proton donor in catalysis. 73–75 (GAA) is a binding site for substrate.

Belongs to the PanD family. In terms of assembly, heterooctamer of four alpha and four beta subunits. The cofactor is pyruvate. In terms of processing, is synthesized initially as an inactive proenzyme, which is activated by self-cleavage at a specific serine bond to produce a beta-subunit with a hydroxyl group at its C-terminus and an alpha-subunit with a pyruvoyl group at its N-terminus.

It localises to the cytoplasm. It catalyses the reaction L-aspartate + H(+) = beta-alanine + CO2. It participates in cofactor biosynthesis; (R)-pantothenate biosynthesis; beta-alanine from L-aspartate: step 1/1. Its function is as follows. Catalyzes the pyruvoyl-dependent decarboxylation of aspartate to produce beta-alanine. The chain is Aspartate 1-decarboxylase from Sulfurimonas denitrificans (strain ATCC 33889 / DSM 1251) (Thiomicrospira denitrificans (strain ATCC 33889 / DSM 1251)).